Here is a 628-residue protein sequence, read N- to C-terminus: (-)-beta-pinene synthase 1, chloroplastic (628 aa).

A chloroplast-targeting transit peptide spans 1-51 (MDLISVLPSASKSCVCLHKPLSSSTHKLKPFCRTIRILGMPRPRKSVLMVS). 3 residues coordinate Mg(2+): Asp-379, Asp-383, and Asp-531. Residues 379–383 (DDMYD) carry the DDXXD motif motif.

It belongs to the terpene synthase family. Tpsd subfamily. The cofactor is Mg(2+). Mn(2+) is required as a cofactor.

Its subcellular location is the plastid. The protein localises to the chloroplast. The catalysed reaction is (2E)-geranyl diphosphate = (1S,5S)-beta-pinene + diphosphate. It catalyses the reaction (2E)-geranyl diphosphate = (1S,5S)-alpha-pinene + diphosphate. Its pathway is terpene metabolism; oleoresin biosynthesis. It functions in the pathway secondary metabolite biosynthesis; terpenoid biosynthesis. Functionally, monoterpene synthase (TPS) involved in the biosynthesis of monoterpene natural products included in conifer oleoresin secretions and volatile emissions; these compounds contribute to biotic and abiotic stress defense against herbivores and pathogens. Catalyzes the conversion of (2E)-geranyl diphosphate (GPP) to (-)-beta-pinene and, to a lower extent, to (-)-alpha-pinene. This Pinus banksiana (Jack pine) protein is (-)-beta-pinene synthase 1, chloroplastic.